A 111-amino-acid chain; its full sequence is Irditoxin subunit B (111 aa).

Positions 1 to 19 (MKTLLLAVAVVAFVCLGSA) are cleaved as a signal peptide. The propeptide occupies 20–34 (DQLGLGRQQIDWGKG). Glutamine 35 carries the pyrrolidone carboxylic acid modification. Disulfide bonds link cysteine 44/cysteine 68, cysteine 47/cysteine 55, cysteine 61/cysteine 87, cysteine 91/cysteine 102, and cysteine 103/cysteine 108.

This sequence belongs to the three-finger toxin family. Ancestral subfamily. Boigatoxin sub-subfamily. In terms of assembly, heterodimer of A and B chains; disulfide-linked. As to expression, expressed by the venom gland.

It localises to the secreted. This bird and reptile-specific postsynaptic neurotoxin inhibits the chick muscle alpha-1-beta-1-gamma-delta (CHRNA1-CHRNB1-CHRNG-CHRND) nicotinic acetylcholine receptor (nAChR) 100-fold more compared with the mouse receptor. In vivo, produces rapid flaccid paralysis, dyspnea and increased respiratory rate in geckos. At sublethal doses geckos were immobilized for up to three days and then recovered. Chicks injected with lethal doses showed rapid onset of inactivity, dyspnea and neck droop, and no extended paralysis with survival was seen. This is Irditoxin subunit B from Boiga irregularis (Brown tree snake).